A 138-amino-acid chain; its full sequence is uncharacterized protein (138 aa).

An N-terminal signal peptide occupies residues 1 to 37 (MNSTFTSQPLLNRSEPRVFKEFYRLVIGCNPAWQVMA).

To H.influenzae HI_1631.

This is an uncharacterized protein from Sinorhizobium fredii (strain NBRC 101917 / NGR234).